We begin with the raw amino-acid sequence, 161 residues long: RNA pyrophosphohydrolase (161 aa).

Residues 6 to 149 (GYRPNVGIIL…KKDVYRRALK (144 aa)) enclose the Nudix hydrolase domain. The short motif at 38-59 (GGIKSDETPEEALFRELKEEVG) is the Nudix box element.

Belongs to the Nudix hydrolase family. RppH subfamily. Requires a divalent metal cation as cofactor.

Its function is as follows. Accelerates the degradation of transcripts by removing pyrophosphate from the 5'-end of triphosphorylated RNA, leading to a more labile monophosphorylated state that can stimulate subsequent ribonuclease cleavage. The polypeptide is RNA pyrophosphohydrolase (Marinomonas sp. (strain MWYL1)).